Consider the following 1495-residue polypeptide: Nuclear pore complex protein NUP160 (1495 aa).

As to quaternary structure, part of the nuclear pore complex (NPC). The NPC has an eight-fold symmetrical structure comprising a central transport channel and two rings, the cytoplasmic and nuclear rings, to which eight filaments are attached. The cytoplasmic filaments have loose ends, while the nuclear filaments are joined in a distal ring, forming a nuclear basket. NPCs are highly dynamic in configuration and composition, and can be devided in 3 subcomplexes, the NUP62 subcomplex, the NUP107-160 subcomplex and the NUP93 subcomplex, containing approximately 30 different nucleoporin proteins. In terms of tissue distribution, expressed in roots, stems, anthers, siliques and vascular tissues of cotyledons, leaves and hypocotyls.

The protein localises to the nucleus membrane. It is found in the nucleus. Its subcellular location is the nuclear pore complex. Its function is as follows. Contributes to the transfer of mature mRNA from the nucleus to the cytosol. Required for both R gene-mediated and basal disease resistance. RNA export seems to play a critical role in stress responses and regulation of plant growth and development. Required for proper expression of factors associated with auxin signaling. This is Nuclear pore complex protein NUP160 from Arabidopsis thaliana (Mouse-ear cress).